We begin with the raw amino-acid sequence, 1033 residues long: Calcium-transporting ATPase 3, plasma membrane-type (1033 aa).

Residues 1 to 180 (MHSGVNGCCP…FVWEALEDTT (180 aa)) lie on the Cytoplasmic side of the membrane. 2 helical membrane-spanning segments follow: residues 181 to 201 (LIIL…TEGW) and 204 to 224 (GAHD…VTGT). Topologically, residues 225-268 (SNYQQSLQFRDLDKEKRKILVQVTRNGLRQRVLIDDLLPGDAVH) are cytoplasmic. The next 2 membrane-spanning stretches (helical) occupy residues 269–289 (LAVG…SVLV) and 362–382 (IGKI…QGII). Topologically, residues 383-405 (GQKYLDGLLLSWSGDDVLEILDH) are cytoplasmic. Residues 406–426 (FAVAVTIVVVAVPEGLPLAVT) form a helical membrane-spanning segment. Residue Asp-461 is the 4-aspartylphosphate intermediate of the active site. Residues Asp-762 and Asp-766 each contribute to the Mg(2+) site. Residues 823–843 (FQLTVNVVALLVNFTSACFTG) traverse the membrane as a helical segment. Over 844-846 (DAP) the chain is Cytoplasmic. A run of 2 helical transmembrane segments spans residues 847-867 (LTAV…ALAL) and 928-948 (IVLN…NEIS). Over 949-965 (SREMEDINVLRGMAGNS) the chain is Cytoplasmic. Helical transmembrane passes span 966–986 (IFLG…QFLG) and 999–1019 (WLIS…IKLI). At 1020–1033 (AVEPHEKADTRRTP) the chain is on the cytoplasmic side.

Belongs to the cation transport ATPase (P-type) (TC 3.A.3) family. Type IIB subfamily.

It localises to the membrane. The catalysed reaction is Ca(2+)(in) + ATP + H2O = Ca(2+)(out) + ADP + phosphate + H(+). Its activity is regulated as follows. Activated by calmodulin. Functionally, this magnesium-dependent enzyme catalyzes the hydrolysis of ATP coupled with the translocation of calcium from the cytosol out of the cell, into the endoplasmic reticulum, or into organelles. This chain is Calcium-transporting ATPase 3, plasma membrane-type, found in Oryza sativa subsp. japonica (Rice).